Consider the following 412-residue polypeptide: Serine hydroxymethyltransferase (412 aa).

(6S)-5,6,7,8-tetrahydrofolate-binding positions include leucine 121 and 125-127; that span reads GHL. Lysine 230 is modified (N6-(pyridoxal phosphate)lysine). 353–355 contributes to the (6S)-5,6,7,8-tetrahydrofolate binding site; the sequence is TPF.

It belongs to the SHMT family. Homodimer. Pyridoxal 5'-phosphate is required as a cofactor.

The protein resides in the cytoplasm. The catalysed reaction is (6R)-5,10-methylene-5,6,7,8-tetrahydrofolate + glycine + H2O = (6S)-5,6,7,8-tetrahydrofolate + L-serine. It functions in the pathway one-carbon metabolism; tetrahydrofolate interconversion. The protein operates within amino-acid biosynthesis; glycine biosynthesis; glycine from L-serine: step 1/1. Catalyzes the reversible interconversion of serine and glycine with tetrahydrofolate (THF) serving as the one-carbon carrier. This reaction serves as the major source of one-carbon groups required for the biosynthesis of purines, thymidylate, methionine, and other important biomolecules. Also exhibits THF-independent aldolase activity toward beta-hydroxyamino acids, producing glycine and aldehydes, via a retro-aldol mechanism. The sequence is that of Serine hydroxymethyltransferase from Finegoldia magna (strain ATCC 29328 / DSM 20472 / WAL 2508) (Peptostreptococcus magnus).